We begin with the raw amino-acid sequence, 129 residues long: UPF0102 protein amb4503 (129 aa).

The protein belongs to the UPF0102 family.

In Paramagnetospirillum magneticum (strain ATCC 700264 / AMB-1) (Magnetospirillum magneticum), this protein is UPF0102 protein amb4503.